A 257-amino-acid chain; its full sequence is Type III pantothenate kinase (257 aa).

6-13 (EQGNTNTL) is a binding site for ATP. 107-110 (GADR) is a substrate binding site. Residue aspartate 109 is the Proton acceptor of the active site. Residue aspartate 129 coordinates K(+). Threonine 132 is a binding site for ATP. A substrate-binding site is contributed by threonine 184.

This sequence belongs to the type III pantothenate kinase family. As to quaternary structure, homodimer. NH4(+) is required as a cofactor. The cofactor is K(+).

It is found in the cytoplasm. It catalyses the reaction (R)-pantothenate + ATP = (R)-4'-phosphopantothenate + ADP + H(+). It participates in cofactor biosynthesis; coenzyme A biosynthesis; CoA from (R)-pantothenate: step 1/5. Catalyzes the phosphorylation of pantothenate (Pan), the first step in CoA biosynthesis. This chain is Type III pantothenate kinase, found in Phenylobacterium zucineum (strain HLK1).